A 360-amino-acid chain; its full sequence is Putative F-box protein At5g55150 (360 aa).

An F-box domain is found at 6–54 (SSWSEFLPELLNTVFHNLNDARDILNCATVCSSWKDSSSAVYYSRTFSP).

The polypeptide is Putative F-box protein At5g55150 (Arabidopsis thaliana (Mouse-ear cress)).